The primary structure comprises 61 residues: Alpha-conotoxin-like PnMGMR-02 (61 aa).

The N-terminal stretch at 1-21 is a signal peptide; the sequence is MGMRMMFTVFLLVVLATTVVS. A propeptide spanning residues 22–44 is cleaved from the precursor; it reads FTSDRASDGGNAAASDLIALTIK. 2 disulfide bridges follow: Cys-46–Cys-52 and Cys-47–Cys-60. Residues 48–50 are ser-Xaa-Pro motif, crucial for potent interaction with nAChR; the sequence is SRP. Cys-60 carries the post-translational modification Cysteine amide.

Belongs to the conotoxin A superfamily. Expressed by the venom duct.

The protein localises to the secreted. Functionally, alpha-conotoxins act on postsynaptic membranes, they bind to the nicotinic acetylcholine receptors (nAChR) and thus inhibit them. This toxin blocks mammalian nAChRs (alpha-7 &gt; alpha-3/beta-2). This Conus pennaceus (Feathered cone) protein is Alpha-conotoxin-like PnMGMR-02.